The sequence spans 351 residues: Ribosomal RNA large subunit methyltransferase M (351 aa).

Residues S183, 216–219 (APGG), D235, D255, and D271 contribute to the S-adenosyl-L-methionine site. K300 acts as the Proton acceptor in catalysis.

This sequence belongs to the class I-like SAM-binding methyltransferase superfamily. RNA methyltransferase RlmE family. RlmM subfamily. Monomer.

It localises to the cytoplasm. The catalysed reaction is cytidine(2498) in 23S rRNA + S-adenosyl-L-methionine = 2'-O-methylcytidine(2498) in 23S rRNA + S-adenosyl-L-homocysteine + H(+). Its function is as follows. Catalyzes the 2'-O-methylation at nucleotide C2498 in 23S rRNA. The protein is Ribosomal RNA large subunit methyltransferase M of Ectopseudomonas mendocina (strain ymp) (Pseudomonas mendocina).